The chain runs to 758 residues: MNQTISSRAPQKRLAPRLLCVMIGAALGTLSASSWAAAATDSTAENAKKTSATAATAKAEDSKTNDTITVVGAQETFRAGGNDLIPTYLDGQVANGGRIGFLGQQDARNVPFNVIGYTSKMIEDQQANSIADVVKNDASVQNVRGYGNPSQNYRIRGYNLDGDDISFGGLFGVLPRQIVSTSMVERVEVFKGANAFINGISPSGSGVGGMINLEPKRAGDTPLTRVTVDYGSASQVGGALDVGRRYGDDDQFGVRVNVLHREGESAIHDQKERTTAVSTGLDYRGDRARTSLDVGYQKQTIHHMRTDVAIGGATVIPEPPSSTLNYGQSWVYTDMETTFGMLRSEYDVSQNWTVYGSVGASRNEETGQYGAPMLTNNNGDATISRLYVPYVADSVAGLGGIRGHFDTGPITHKVNLGYAANYRTTKSAWNMSGQEDTNIYNPGVIGFPQTVMGSDSQDPQLTSQVRASGLSLSDTLSMMDDKVSLMLGVRRQEVTIRNFDSGVPNSAGSLDAMKVTPIYGIMVKPWEKVSLYANHIEALGPGKSAPYQYNGKPVVNAGQIPGIIHSKQNEIGVKFDNQRYGGTLALFEITRPTGMVDPATNVYGFYGEQRNRGIELNVFGEPVFGTRLLASATWLDPKLTKAADSANNGNDAVGVANYQLVFGGEYDIPVVEGLTATGTVVRSGSQYANEANTLKLKPWTRLDLGVRYTMPMKDTSLTWRANIENVTNERYWESVEDSGTYIYQGDPRALKLSVSMDF.

Residues 1–36 form the signal peptide; the sequence is MNQTISSRAPQKRLAPRLLCVMIGAALGTLSASSWA. The TonB box motif lies at 66-73; that stretch reads DTITVVGA. The region spanning 106-216 is the TBDR plug domain; sequence DARNVPFNVI…VGGMINLEPK (111 aa). The TBDR beta-barrel domain maps to 221-758; that stretch reads TPLTRVTVDY…ALKLSVSMDF (538 aa). The TonB C-terminal box motif lies at 741-758; it reads YIYQGDPRALKLSVSMDF.

This sequence belongs to the TonB-dependent receptor family.

Its subcellular location is the cell outer membrane. Its function is as follows. Receptor for the hydroxamate siderophore, ferrichrome. Binds also to most other ferrichrome derivatives except enantio ferrichrome and ferric rhodotorulate. In Yersinia enterocolitica, this protein is Ferrichrome receptor FcuA (fcuA).